Consider the following 434-residue polypeptide: Transcription initiation factor IIE subunit alpha (434 aa).

Residues 8-99 (VQRLIKMIMR…DFCSTIDSIK (92 aa)) enclose the HTH TFE/IIEalpha-type domain. The segment at 124–151 (CPFCNKKFSSLDVLSLVTNEGTFACNVC) adopts a C4-type zinc-finger fold. Disordered stretches follow at residues 217–251 (QQNLSKSNSDVRLSTSSPSITVDFSADKETDEKRE), 357–408 (STDY…EMQE), and 415–434 (INGFNEDDEDDEDEADFEDV). Polar residues predominate over residues 226 to 238 (DVRLSTSSPSITV). Composition is skewed to basic and acidic residues over residues 241-251 (SADKETDEKRE) and 376-385 (IQNKRTKSIE). Residues 386–399 (ENNSLPPIVSTNGI) are compositionally biased toward polar residues. Acidic residues predominate over residues 419-434 (NEDDEDDEDEADFEDV).

Belongs to the TFIIE alpha subunit family. In terms of assembly, TFIIE is a tetramer of two alpha (tfa1) and two beta (tfa2) subunits.

It localises to the nucleus. In terms of biological role, recruits TFIIH to the initiation complex and stimulates the RNA polymerase II C-terminal domain kinase and DNA-dependent ATPase activities of TFIIH. Both TFIIH and TFIIE are required for promoter clearance by RNA polymerase. In Schizosaccharomyces pombe (strain 972 / ATCC 24843) (Fission yeast), this protein is Transcription initiation factor IIE subunit alpha (tfa1).